Reading from the N-terminus, the 222-residue chain is Ribonuclease T (222 aa).

The region spanning 20–194 (VVIDVETAGF…YDTERTAELF (175 aa)) is the Exonuclease domain. Positions 23, 25, 181, and 186 each coordinate Mg(2+). His181 serves as the catalytic Proton donor/acceptor.

This sequence belongs to the RNase T family. As to quaternary structure, homodimer. Requires Mg(2+) as cofactor.

Trims short 3' overhangs of a variety of RNA species, leaving a one or two nucleotide 3' overhang. Responsible for the end-turnover of tRNA: specifically removes the terminal AMP residue from uncharged tRNA (tRNA-C-C-A). Also appears to be involved in tRNA biosynthesis. In Shewanella sp. (strain MR-4), this protein is Ribonuclease T.